We begin with the raw amino-acid sequence, 254 residues long: Type III pantothenate kinase (254 aa).

6–13 is an ATP binding site; that stretch reads DVGNTNTV. Substrate is bound by residues Y100 and 107 to 110; that span reads GADR. D109 functions as the Proton acceptor in the catalytic mechanism. D129 lines the K(+) pocket. T132 contacts ATP. T184 is a substrate binding site.

The protein belongs to the type III pantothenate kinase family. Homodimer. It depends on NH4(+) as a cofactor. K(+) serves as cofactor.

The protein resides in the cytoplasm. The catalysed reaction is (R)-pantothenate + ATP = (R)-4'-phosphopantothenate + ADP + H(+). It functions in the pathway cofactor biosynthesis; coenzyme A biosynthesis; CoA from (R)-pantothenate: step 1/5. Its function is as follows. Catalyzes the phosphorylation of pantothenate (Pan), the first step in CoA biosynthesis. The protein is Type III pantothenate kinase of Anaeromyxobacter sp. (strain Fw109-5).